The chain runs to 441 residues: MSEMTPREIVHELDAHIIGQQNAKRSVAVALRNRWRRMQLEPELRHEVTPKNILMIGPTGVGKTEIARRLAKLANAPFIKVEATKFTEVGYVGKEVEQIIRDLTDSAVKMTREQQMKKCRHRAEEMAEERILDALLPKPKDDWDTDQKDDSTTRQVFRKKLREGQLDDKEIEIDVAAPQVGVEIMAPPGMEEMTNQLQGLFQNLGQSTSKRKKLKIKDAYKQLVEDEAAKLVNQEDLKEQAIELVEQNGIVFLDEIDKICKRGESSGPDVSREGVQRDLLPLVEGCTVSTKHGMVKTDHILFIASGAFQMSKPSDLIPELQGRLPIRVELDALTAADFKRILTEPFASLTEQHVALMNTEGVTIEFTESGIERIAEAAWQVNERTENIGARRLHTVMEKLMEEISYDASEKSGSKFVIDAEYVNDHLDTLVQDEDLSRFIL.

ATP is bound by residues Ile18, 60–65, Asp254, Glu319, and Arg391; that span reads GVGKTE.

This sequence belongs to the ClpX chaperone family. HslU subfamily. In terms of assembly, a double ring-shaped homohexamer of HslV is capped on each side by a ring-shaped HslU homohexamer. The assembly of the HslU/HslV complex is dependent on binding of ATP.

It localises to the cytoplasm. In terms of biological role, ATPase subunit of a proteasome-like degradation complex; this subunit has chaperone activity. The binding of ATP and its subsequent hydrolysis by HslU are essential for unfolding of protein substrates subsequently hydrolyzed by HslV. HslU recognizes the N-terminal part of its protein substrates and unfolds these before they are guided to HslV for hydrolysis. The sequence is that of ATP-dependent protease ATPase subunit HslU from Shewanella frigidimarina (strain NCIMB 400).